Here is a 620-residue protein sequence, read N- to C-terminus: Sodium-dependent dopamine transporter (620 aa).

Topologically, residues 1-56 are cytoplasmic; sequence MSKSKCSVGLMSSVVAPAKEPNAVGPKEVELILVKEQNGVQLTSSTLTNPRQSPVE. Residues 57-95 traverse the membrane as a discontinuously helical segment; the sequence is AQDRETWGKKIDFLLSVIGFAVDLANVWRFPYLCYKNGG. Na(+)-binding residues include glycine 75, alanine 77, valine 78, aspartate 79, and asparagine 82. Aspartate 79 is a dopamine binding site. Transmembrane regions (helical) follow at residues 96 to 127 and 128 to 171; these read GAFLVPYLLFMVIAGMPLFYMELALGQFNREG and AAGV…FSSF. Dopamine contacts are provided by serine 149 and glycine 153. Topologically, residues 172-236 are extracellular; sequence TTELPWIHCN…SHGIDDLGPP (65 aa). Cysteine 180 and cysteine 189 form a disulfide bridge. 3 N-linked (GlcNAc...) asparagine glycosylation sites follow: asparagine 181, asparagine 188, and asparagine 205. Helical transmembrane passes span 237–256 and 257–287; these read RWQLTACLVLVIVLLYFSLW and KGVKTSGKVVWITATMPYVVLTALLLRGVTL. The Extracellular portion of the chain corresponds to 288 to 306; it reads PGAIDGIRAYLSVDFYRLC. The chain crosses the membrane as a discontinuously helical span at residues 307–335; that stretch reads EASVWIDAATQVCFSLGVGFGVLIAFSSY. Residue glutamine 317 participates in chloride binding. Phenylalanine 320 serves as a coordination point for dopamine. Na(+) contacts are provided by serine 321 and asparagine 353. Serine 321 serves as a coordination point for chloride. A helical transmembrane segment spans residues 336 to 376; the sequence is NKFTNNCYRDAIVTTSINSLTSFSSGFVVFSFLGYMAQKHS. Residue serine 357 coordinates chloride. Residues 377-400 are Extracellular-facing; that stretch reads VPIGDVAKDGPGLIFIIYPEAIAT. The next 3 membrane-spanning stretches (helical) occupy residues 401–442, 443–466, and 467–499; these read LPLS…QLLH, RHRELFTLFIVLATFLLSLFCVTN, and GGIYVFTLLDHFAAGTSILFGVLIEAIGVAWFY. Leucine 418, aspartate 421, and serine 422 together coordinate Na(+). Residues serine 422 and alanine 423 each coordinate dopamine. The Cytoplasmic portion of the chain corresponds to 500-516; it reads GVGQFSDDIQQMTGQRP. Residues 517-542 traverse the membrane as a helical segment; it reads SLYWRLCWKLVSPCFLLFVVVVSIVT. Residues 543 to 553 lie on the Extracellular side of the membrane; that stretch reads FRPPHYGAYIF. Residues 554–583 traverse the membrane as a helical segment; it reads PDWANALGWVIATSSMAMVPIYAAYKFCSL. The interval 561–590 is interaction with TGFB1I1; sequence GWVIATSSMAMVPIYAAYKFCSLPGSFREK. The Cytoplasmic portion of the chain corresponds to 584–620; sequence PGSFREKLAYAIAPEKDRELVDRGEVRQFTLRHWLKV.

Belongs to the sodium:neurotransmitter symporter (SNF) (TC 2.A.22) family. SLC6A3 subfamily. As to quaternary structure, monomer. Homooligomer; disulfide-linked. Interacts with PRKCABP and TGFB1I1. Interacts (via N-terminus) with SYNGR3 (via N-terminus). Interacts with SLC18A2. Interacts with TOR1A (ATP-bound); TOR1A regulates SLC6A3 subcellular location. Interacts with alpha-synuclein/SNCA. Interacts with SEPTIN4. Highly expressed in substantia nigra. Expressed in axonal varicosities in dopaminergic nerve terminals (at protein level). Expressed in the striatum (at protein level).

It is found in the cell membrane. It localises to the cell projection. Its subcellular location is the neuron projection. The protein resides in the axon. The catalysed reaction is dopamine(out) + chloride(out) + Na(+)(out) = dopamine(in) + chloride(in) + Na(+)(in). It carries out the reaction dopamine(out) + chloride(out) + 2 Na(+)(out) = dopamine(in) + chloride(in) + 2 Na(+)(in). It catalyses the reaction (R)-noradrenaline(out) + chloride(out) + Na(+)(out) = (R)-noradrenaline(in) + chloride(in) + Na(+)(in). With respect to regulation, inhibited by cocaine, which occupies the same binding site as dopamine. Inhibited by zinc ions. Enhanced by the antibiotic valinomycin. Inhibited by benztropine. Inhibited by GBR 12909 dihydrochloride and amphetamine. Inhibited by mazindol, GBR 12783 dihydrochloride, nomifensine, diclofensine, amfonelic acid, Lu 19005, Win-35428, bupropion and ritalin. Functionally, mediates sodium- and chloride-dependent transport of dopamine. Also mediates sodium- and chloride-dependent transport of norepinephrine (also known as noradrenaline). Regulator of light-dependent retinal hyaloid vessel regression, downstream of OPN5 signaling. The protein is Sodium-dependent dopamine transporter (SLC6A3) of Homo sapiens (Human).